Consider the following 430-residue polypeptide: Immunoglobulin heavy constant delta (430 aa).

Residues 1–406 (APTKAPDVFP…FDDVGSLWTT (406 aa)) lie on the Extracellular side of the membrane. An Ig-like 1 domain is found at 6–98 (PDVFPIISGC…TASKSKKEIF (93 aa)). Cys28 and Cys84 are disulfide-bonded. The segment at 96-167 (EIFRWPESPK…TPECPSHTQP (72 aa)) is disordered. Polar residues predominate over residues 106-118 (AQASSVPTAQPQA). Residues Ser109 and Ser110 are each glycosylated (O-linked (GalNAc...) serine). Residues Thr113, Thr126, Thr127, Thr131, and Thr132 are each glycosylated (O-linked (GalNAc...) threonine). The span at 138–158 (GGEEKKKEKEKEEQEERETKT) shows a compositional bias: basic and acidic residues. 2 Ig-like domains span residues 175–263 (PAVQ…RLMA) and 267–373 (PAAQ…RSLE). 2 disulfides stabilise this stretch: Cys190/Cys249 and Cys294/Cys355. N-linked (GlcNAc...) asparagine glycosylation is found at Asn225, Asn316, and Asn367. The helical transmembrane segment at 407–427 (LSTFVALFILTLLYSGIVTFI) threads the bilayer. At 428–430 (KVK) the chain is on the cytoplasmic side.

Immunoglobulins are composed of two identical heavy chains and two identical light chains; disulfide-linked. An IgD molecule contains thus a delta heavy chain combined with either a kappa or a lambda light chains. Kappa light chains are found predominantly on the membrane IgD (mIgD) form and lambda on the secreted IgD (sIgD) form, this fact is poorly understood. Membrane-bound IgD molecules are non-covalently associated with a heterodimer of CD79A and CD79B.

It localises to the secreted. Its subcellular location is the cell membrane. Functionally, constant region of immunoglobulin heavy chains. Immunoglobulins, also known as antibodies, are membrane-bound or secreted glycoproteins produced by B lymphocytes. In the recognition phase of humoral immunity, the membrane-bound immunoglobulins serve as receptors which, upon binding of a specific antigen, trigger the clonal expansion and differentiation of B lymphocytes into immunoglobulins-secreting plasma cells. Secreted immunoglobulins mediate the effector phase of humoral immunity, which results in the elimination of bound antigens. The antigen binding site is formed by the variable domain of one heavy chain, together with that of its associated light chain. Thus, each immunoglobulin has two antigen binding sites with remarkable affinity for a particular antigen. The variable domains are assembled by a process called V-(D)-J rearrangement and can then be subjected to somatic hypermutations which, after exposure to antigen and selection, allow affinity maturation for a particular antigen. IgD is the major antigen receptor isotype on the surface of most peripheral B-cells, where it is coexpressed with IgM. The membrane-bound IgD (mIgD) induces the phosphorylation of CD79A and CD79B by the Src family of protein tyrosine kinases. Soluble IgD (sIgD) concentration in serum below those of IgG, IgA, and IgM but much higher than that of IgE. IgM and IgD molecules present on B cells have identical V regions and antigen-binding sites. After the antigen binds to the B-cell receptor, the secreted form sIgD is shut off. IgD is a potent inducer of TNF, IL1B, and IL1RN. IgD also induces release of IL6, IL10, and LIF from peripheral blood mononuclear cells. Monocytes seem to be the main producers of cytokines in vitro in the presence of IgD. The polypeptide is Immunoglobulin heavy constant delta (Homo sapiens (Human)).